A 297-amino-acid polypeptide reads, in one-letter code: TATA-box-binding protein (297 aa).

Residues 52 to 116 (EEQQRQQQQA…ITPATPASES (65 aa)) are disordered. Low complexity-rich tracts occupy residues 56-78 (RQQQQAQQSTSQQGNQGSGQTPQ) and 104-114 (MTPITPATPAS). Repeat copies occupy residues 123 to 199 (LQNI…ARVV) and 213 to 290 (IQNM…YPIL).

The protein belongs to the TBP family. Belongs to the TFIID complex together with the TBP-associated factors (TAFs). Binds DNA as monomer. Post-translationally, the N-terminal domain is extensively phosphorylated.

The protein localises to the nucleus. In terms of biological role, general transcription factor that functions at the core of the DNA-binding multiprotein factor TFIID. Binding of TFIID to the TATA box is the initial transcriptional step of the pre-initiation complex (PIC), playing a role in the activation of eukaryotic genes transcribed by RNA polymerase II. Members of the TBP family are differentially required to regulate transcription and development during early embryogenesis. Binds to the promoters of select genes. The protein is TATA-box-binding protein of Xenopus tropicalis (Western clawed frog).